A 492-amino-acid chain; its full sequence is KAT8 regulatory NSL complex subunit 2 (492 aa).

Residue K78 forms a Glycyl lysine isopeptide (Lys-Gly) (interchain with G-Cter in SUMO2) linkage. The interval 127–182 (LGSQTPESSRSEASRILDEDSWSDGEQEPITVDQTWRGDPDSEADSIDSDQEDPLK) is disordered. T131 is modified (phosphothreonine). Residues 135–144 (SRSEASRILD) are compositionally biased toward basic and acidic residues. Phosphoserine occurs at positions 147, 149, 168, 172, and 175. Positions 167–178 (DSEADSIDSDQE) are enriched in acidic residues. The tract at residues 308 to 364 (DVRCSNQSLPMTRHCLTHICQDTNQVLFKCCQGSEEVPCNKPVPVSLSEDPCCPLHF) is required for interaction with other NSL complex members. A disordered region spans residues 455–492 (AGDGCRSQGSRNSEKGSAPLSQSGLATANGKPEPTSIS).

Component of the NSL complex at least composed of KAT8/MOF, KANSL1, KANSL2, KANSL3, MCRS1, PHF20, OGT1/OGT, WDR5 and HCFC1.

The protein localises to the nucleus. The protein resides in the mitochondrion. Functionally, non-catalytic component of the NSL histone acetyltransferase complex, a multiprotein complex that mediates histone H4 acetylation at 'Lys-5'- and 'Lys-8' (H4K5ac and H4K8ac) at transcription start sites and promotes transcription initiation. Required for NSL complex stability and for transcription of intraciliary transport genes in both ciliated and non-ciliated cells by regulating histone H4 acetylation at 'Lys-5'- and 'Lys-12' (H4K5ac and H4K12ac). This is necessary for cilium assembly in ciliated cells and for organization of the microtubule cytoskeleton in non-ciliated cells. Required within the NSL complex to maintain nuclear architecture stability by promoting KAT8-mediated acetylation of lamin LMNA. The protein is KAT8 regulatory NSL complex subunit 2 (KANSL2) of Pongo abelii (Sumatran orangutan).